Reading from the N-terminus, the 94-residue chain is PqqA binding protein (94 aa).

It belongs to the PqqD family. In terms of assembly, monomer. Interacts with PqqE.

It participates in cofactor biosynthesis; pyrroloquinoline quinone biosynthesis. In terms of biological role, functions as a PqqA binding protein and presents PqqA to PqqE, in the pyrroloquinoline quinone (PQQ) biosynthetic pathway. The protein is PqqA binding protein of Acinetobacter baumannii (strain SDF).